A 328-amino-acid polypeptide reads, in one-letter code: ATP-dependent 6-phosphofructokinase (328 aa).

Position 11 (glycine 11) interacts with ATP. 21–25 (RAAVR) lines the ADP pocket. Residues 72–73 (RS) and 102–105 (GNGT) contribute to the ATP site. A Mg(2+)-binding site is contributed by asparagine 103. 126 to 128 (TID) provides a ligand contact to substrate. Residue aspartate 128 is the Proton acceptor of the active site. ADP is bound at residue arginine 155. Substrate contacts are provided by residues arginine 163 and 170 to 172 (MGR). Residues 186-188 (GAE) and 214-216 (KAS) each bind ADP. Substrate contacts are provided by residues glutamate 223, arginine 247, and 253–256 (HVQR).

Belongs to the phosphofructokinase type A (PFKA) family. ATP-dependent PFK group I subfamily. Prokaryotic clade 'B1' sub-subfamily. In terms of assembly, homotetramer. Mg(2+) is required as a cofactor.

The protein localises to the cytoplasm. The catalysed reaction is beta-D-fructose 6-phosphate + ATP = beta-D-fructose 1,6-bisphosphate + ADP + H(+). It participates in carbohydrate degradation; glycolysis; D-glyceraldehyde 3-phosphate and glycerone phosphate from D-glucose: step 3/4. With respect to regulation, allosterically activated by ADP and other diphosphonucleosides, and allosterically inhibited by phosphoenolpyruvate. Catalyzes the phosphorylation of D-fructose 6-phosphate to fructose 1,6-bisphosphate by ATP, the first committing step of glycolysis. The polypeptide is ATP-dependent 6-phosphofructokinase (Cytophaga hutchinsonii (strain ATCC 33406 / DSM 1761 / CIP 103989 / NBRC 15051 / NCIMB 9469 / D465)).